We begin with the raw amino-acid sequence, 220 residues long: Fructose-6-phosphate aldolase (220 aa).

Catalysis depends on K85, which acts as the Schiff-base intermediate with substrate.

The protein belongs to the transaldolase family. Type 3A subfamily. Homodecamer.

The protein resides in the cytoplasm. The enzyme catalyses beta-D-fructose 6-phosphate = dihydroxyacetone + D-glyceraldehyde 3-phosphate. Functionally, catalyzes the reversible formation of fructose 6-phosphate from dihydroxyacetone and D-glyceraldehyde 3-phosphate via an aldolization reaction. The chain is Fructose-6-phosphate aldolase from Salmonella gallinarum (strain 287/91 / NCTC 13346).